Reading from the N-terminus, the 508-residue chain is Octopamine receptor beta-1R (508 aa).

The Extracellular segment spans residues 1-111 (MTLLQRLQAM…SHLALVFVKC (111 aa)). Residues 112–132 (FIIGFIILAAILGNMLVIVSV) traverse the membrane as a helical segment. The Cytoplasmic portion of the chain corresponds to 133–139 (MRHRKLR). The helical transmembrane segment at 140-160 (IITNYFVVSLAVADMLVALCA) threads the bilayer. The Extracellular portion of the chain corresponds to 161-186 (MTFNASVMISGKWMFGSVMCDMWNSF). N164 is a glycosylation site (N-linked (GlcNAc...) asparagine). Residues 187–209 (DVYFSTASIMHLCCISVDRYYAI) form a helical membrane-spanning segment. At 210–223 (VQPLDYPLIMTQRR) the chain is on the cytoplasmic side. A helical membrane pass occupies residues 224–244 (VFIMLLMVWLSPALLSFLPIC). Over 245 to 270 (SGWYTTTENYKYLKSNPHICEFKVNK) the chain is Extracellular. A helical membrane pass occupies residues 271 to 291 (AYAIVSSSMSFWIPGIVMLSM). Residues 292–351 (YYRIYQEADRQERLVYRSKVAALLLEKHLQISQIPKPRPSIQVEQSTISTMRRERKAART) are Cytoplasmic-facing. A helical membrane pass occupies residues 352-372 (LGIIMSAFLICWLPFFLWYIV). Topologically, residues 373–383 (SSLCDSCITPR) are extracellular. Residues 384–404 (LLVGILFWIGYFNSALNPIIY) form a helical membrane-spanning segment. At 405 to 508 (AYFNRDFRAA…MQQLHPLYTN (104 aa)) the chain is on the cytoplasmic side. The disordered stretch occupies residues 440-464 (RDLEFGGPSRRGTNGAQRTGSGSAE). Residues 450–461 (RGTNGAQRTGSG) are compositionally biased toward polar residues.

Belongs to the G-protein coupled receptor 1 family. In the adult, expressed in the superior protocerebrum and the optic lobe medulla of the central nervous system, nurse cells of egg chambers in the ovary at oogenic stages 1-10, and spermatogonia and spermatocytes in the testis. Expressed in embryonic and larval ventral nerve cord and brain lobe, and the larval imaginal disk and larval salivary gland. Also expressed in larval synaptic boutons and retinal cells in the optic disk.

Its subcellular location is the cell membrane. Its function is as follows. Autoreceptor for octopamine, which is a neurotransmitter, neurohormone, and neuromodulator in invertebrates. Negatively regulates synaptic growth by activating the inhibitory G protein Galphao and limiting cAMP production. Antagonizes the action of Octbeta2R which stimulates synaptic growth. The sequence is that of Octopamine receptor beta-1R from Drosophila melanogaster (Fruit fly).